Consider the following 521-residue polypeptide: GMP synthase [glutamine-hydrolyzing] (521 aa).

A Glutamine amidotransferase type-1 domain is found at 5–203 (KILILDFGSQ…VHEICGCGND (199 aa)). Cysteine 82 acts as the Nucleophile in catalysis. Catalysis depends on residues histidine 177 and glutamate 179. The region spanning 204–396 (WNMPDYISEA…LGLPHDMVYR (193 aa)) is the GMPS ATP-PPase domain. 231 to 237 (SGGVDSS) provides a ligand contact to ATP.

Homodimer.

The catalysed reaction is XMP + L-glutamine + ATP + H2O = GMP + L-glutamate + AMP + diphosphate + 2 H(+). It participates in purine metabolism; GMP biosynthesis; GMP from XMP (L-Gln route): step 1/1. Catalyzes the synthesis of GMP from XMP. This chain is GMP synthase [glutamine-hydrolyzing], found in Azoarcus sp. (strain BH72).